Reading from the N-terminus, the 213-residue chain is Imidazole glycerol phosphate synthase subunit HisH (213 aa).

The 208-residue stretch at 6 to 213 (LVTVIDYGMG…FKNFLNWNGQ (208 aa)) folds into the Glutamine amidotransferase type-1 domain. The Nucleophile role is filled by cysteine 86. Residues histidine 192 and glutamate 194 contribute to the active site.

In terms of assembly, heterodimer of HisH and HisF.

It is found in the cytoplasm. It carries out the reaction 5-[(5-phospho-1-deoxy-D-ribulos-1-ylimino)methylamino]-1-(5-phospho-beta-D-ribosyl)imidazole-4-carboxamide + L-glutamine = D-erythro-1-(imidazol-4-yl)glycerol 3-phosphate + 5-amino-1-(5-phospho-beta-D-ribosyl)imidazole-4-carboxamide + L-glutamate + H(+). The enzyme catalyses L-glutamine + H2O = L-glutamate + NH4(+). The protein operates within amino-acid biosynthesis; L-histidine biosynthesis; L-histidine from 5-phospho-alpha-D-ribose 1-diphosphate: step 5/9. Functionally, IGPS catalyzes the conversion of PRFAR and glutamine to IGP, AICAR and glutamate. The HisH subunit catalyzes the hydrolysis of glutamine to glutamate and ammonia as part of the synthesis of IGP and AICAR. The resulting ammonia molecule is channeled to the active site of HisF. The polypeptide is Imidazole glycerol phosphate synthase subunit HisH (Hydrogenovibrio crunogenus (strain DSM 25203 / XCL-2) (Thiomicrospira crunogena)).